Consider the following 155-residue polypeptide: Ribosomal RNA large subunit methyltransferase H (155 aa).

S-adenosyl-L-methionine contacts are provided by residues L72, G103, and 122-127; that span reads FGRMVW.

Belongs to the RNA methyltransferase RlmH family. Homodimer.

It is found in the cytoplasm. The catalysed reaction is pseudouridine(1915) in 23S rRNA + S-adenosyl-L-methionine = N(3)-methylpseudouridine(1915) in 23S rRNA + S-adenosyl-L-homocysteine + H(+). Specifically methylates the pseudouridine at position 1915 (m3Psi1915) in 23S rRNA. This is Ribosomal RNA large subunit methyltransferase H from Cereibacter sphaeroides (strain ATCC 17023 / DSM 158 / JCM 6121 / CCUG 31486 / LMG 2827 / NBRC 12203 / NCIMB 8253 / ATH 2.4.1.) (Rhodobacter sphaeroides).